Reading from the N-terminus, the 525-residue chain is Phosphoenolpyruvate carboxykinase (ATP) 1 (525 aa).

Substrate contacts are provided by R55, Y190, and K196. ATP is bound by residues K196, H215, and 231-239 (GLSGTGKTT). The Mn(2+) site is built by K196 and H215. Residue D252 participates in Mn(2+) binding. ATP-binding residues include E280, R317, and T442. Substrate is bound at residue R317.

Belongs to the phosphoenolpyruvate carboxykinase (ATP) family. It depends on Mn(2+) as a cofactor.

It is found in the cytoplasm. It carries out the reaction oxaloacetate + ATP = phosphoenolpyruvate + ADP + CO2. It functions in the pathway carbohydrate biosynthesis; gluconeogenesis. Its function is as follows. Involved in the gluconeogenesis. Catalyzes the conversion of oxaloacetate (OAA) to phosphoenolpyruvate (PEP) through direct phosphoryl transfer between the nucleoside triphosphate and OAA. This chain is Phosphoenolpyruvate carboxykinase (ATP) 1, found in Moorella thermoacetica (strain ATCC 39073 / JCM 9320).